Here is a 1383-residue protein sequence, read N- to C-terminus: DNA-directed RNA polymerase subunit beta (1383 aa).

This sequence belongs to the RNA polymerase beta chain family. As to quaternary structure, the RNAP catalytic core consists of 2 alpha, 1 beta, 1 beta' and 1 omega subunit. When a sigma factor is associated with the core the holoenzyme is formed, which can initiate transcription.

The enzyme catalyses RNA(n) + a ribonucleoside 5'-triphosphate = RNA(n+1) + diphosphate. Functionally, DNA-dependent RNA polymerase catalyzes the transcription of DNA into RNA using the four ribonucleoside triphosphates as substrates. This is DNA-directed RNA polymerase subunit beta from Xanthomonas euvesicatoria pv. vesicatoria (strain 85-10) (Xanthomonas campestris pv. vesicatoria).